Reading from the N-terminus, the 202-residue chain is Matrix protein (202 aa).

Positions 35–38 match the PPXY motif motif; the sequence is PPEY. An essential for glycoprotein binding region spans residues 115 to 151; it reads KLRRTLIFQWADSRGPLEGEELEYSQEITWDDDTEFV.

It belongs to the lyssavirus matrix protein family. Homomultimer. Interacts with nucleoprotein and with the cytoplasmic domain of glycoprotein. Interacts with host ATP6V1A; this interaction plays an important role in virion uncoating after viral entry.

It localises to the virion membrane. Its subcellular location is the host endomembrane system. The protein localises to the host cytoplasm. Plays a major role in assembly, budding and uncoating of virion after membrane fusion. Completely covers the ribonucleoprotein coil and keep it in condensed bullet-shaped form. Inhibits viral transcription and stimulates replication. Plays a major role in early induction of TRAIL-mediated apoptosis in infected neurons. Inhibits the integrated stress response (ISR) in the infected cell by blocking the formation of stress granules. The polypeptide is Matrix protein (M) (Rabies virus (strain CVS-11) (RABV)).